Here is a 205-residue protein sequence, read N- to C-terminus: Dephospho-CoA kinase (205 aa).

The 199-residue stretch at 7–205 folds into the DPCK domain; it reads IIGITGRIAS…QEIINYERFE (199 aa). Residue 15–20 participates in ATP binding; that stretch reads ASGKDA.

The protein belongs to the CoaE family.

Its subcellular location is the cytoplasm. It carries out the reaction 3'-dephospho-CoA + ATP = ADP + CoA + H(+). It participates in cofactor biosynthesis; coenzyme A biosynthesis; CoA from (R)-pantothenate: step 5/5. Functionally, catalyzes the phosphorylation of the 3'-hydroxyl group of dephosphocoenzyme A to form coenzyme A. The sequence is that of Dephospho-CoA kinase from Borrelia garinii subsp. bavariensis (strain ATCC BAA-2496 / DSM 23469 / PBi) (Borreliella bavariensis).